Reading from the N-terminus, the 215-residue chain is Chaperone protein TorD (215 aa).

Belongs to the TorD/DmsD family. TorD subfamily.

The protein localises to the cytoplasm. Functionally, involved in the biogenesis of TorA. Acts on TorA before the insertion of the molybdenum cofactor and, as a result, probably favors a conformation of the apoenzyme that is competent for acquiring the cofactor. In Aliivibrio salmonicida (strain LFI1238) (Vibrio salmonicida (strain LFI1238)), this protein is Chaperone protein TorD.